The sequence spans 100 residues: Small ribosomal subunit protein uS14c (100 aa).

This sequence belongs to the universal ribosomal protein uS14 family. Part of the 30S ribosomal subunit.

It is found in the plastid. In terms of biological role, binds 16S rRNA, required for the assembly of 30S particles. This Epifagus virginiana (Beechdrops) protein is Small ribosomal subunit protein uS14c.